A 341-amino-acid chain; its full sequence is NADH-ubiquinone oxidoreductase chain 2 (341 aa).

The next 9 membrane-spanning stretches (helical) occupy residues 8 to 28 (ILFITIMIIGTLITVTSNSWL), 60 to 80 (YFLTQVLASTVLLFSSILLML), 95 to 115 (MIIMSALLLKSGAAPFHFWFP), 121 to 141 (LTWMNALMLMTWQKIAPLMLI), 146 to 166 (IKYLLLISVILSVIIGAIGGL), 195 to 215 (SIWLIYFFFYSFLSFVLTFMF), 238 to 258 (FTLFMNFLSLGGLPPFLGFLP), 273 to 293 (FMLTLMMMSTLITLFFYLRIC), and 321 to 341 (MIMTFFSIFGLFLISLFYFMF).

Belongs to the complex I subunit 2 family.

It localises to the mitochondrion inner membrane. The catalysed reaction is a ubiquinone + NADH + 5 H(+)(in) = a ubiquinol + NAD(+) + 4 H(+)(out). Its function is as follows. Core subunit of the mitochondrial membrane respiratory chain NADH dehydrogenase (Complex I) that is believed to belong to the minimal assembly required for catalysis. Complex I functions in the transfer of electrons from NADH to the respiratory chain. The immediate electron acceptor for the enzyme is believed to be ubiquinone. This chain is NADH-ubiquinone oxidoreductase chain 2 (mt:ND2), found in Drosophila melanogaster (Fruit fly).